We begin with the raw amino-acid sequence, 149 residues long: Large ribosomal subunit protein bL9 (149 aa).

It belongs to the bacterial ribosomal protein bL9 family.

In terms of biological role, binds to the 23S rRNA. This Actinobacillus pleuropneumoniae serotype 3 (strain JL03) protein is Large ribosomal subunit protein bL9.